Reading from the N-terminus, the 804-residue chain is Tegument protein UL47 homolog (804 aa).

Residues 1–15 (MQSGHYNRRQSRRQR) show a composition bias toward basic residues. Disordered stretches follow at residues 1-42 (MQSG…THPP) and 58-206 (LNSE…DYFS). A Nuclear localization signal motif is present at residues 11 to 31 (SRRQRISSNTTDSPRHTHGTR). Over residues 32-42 (YRSTNWYTHPP) the composition is skewed to polar residues. Residues 62 to 72 (MDQDSSSDASD) are compositionally biased toward acidic residues. Residues 82–93 (STYNGSEQNTST) show a composition bias toward polar residues. Basic and acidic residues predominate over residues 94 to 109 (SRHENRIFKLTEREAN). 3 repeat units span residues 117–132 (DAID…EAEE), 133–148 (DAID…EAEE), and 149–164 (DAID…EAEE). A 6 X 16 AA approximate tandem repeats region spans residues 117–203 (DAIDDEGEAE…IDDEGEAEED (87 aa)). Residues 118-204 (AIDDEGEAEE…DDEGEAEEDY (87 aa)) are compositionally biased toward acidic residues. A 1-4; truncated repeat occupies 170–180 (DAIDDEGEAEE). Residues 181–191 (DAIDDEGEAEE) form a 1-5; truncated repeat. The stretch at 192-203 (DAIDDEGEAEED) is one 1-6; truncated repeat. A Nuclear export signal motif is present at residues 770-792 (QPIPSVDLAENLMQYRNEILGLD).

This sequence belongs to the alphaherpesvirinae HHV-1 UL47 family. As to quaternary structure, interacts with US3 kinase. Interacts with ORF24 and ORF27; these interactions seem important for efficient virion nuclear egress. Interacts with ORF17/VHS. In terms of processing, phosphorylated by US3. This phosphorylation is required for proper nuclear localization.

The protein localises to the virion tegument. It is found in the host nucleus. Its subcellular location is the host cytoplasm. In terms of biological role, tegument protein that can bind to various RNA transcripts. Plays a role in the attenuation of selective viral and cellular mRNA degradation by modulating the activity of host shutoff RNase ORF17/VHS. Also plays a role in the primary envelopment of virions in the perinuclear space, probably by interacting with two nuclear egress proteins ORF24 and ORF27. The chain is Tegument protein UL47 homolog from Varicella-zoster virus (strain Oka vaccine) (HHV-3).